The sequence spans 138 residues: Large ribosomal subunit protein uL16 (138 aa).

Basic residues predominate over residues 1–17 (MLIPRKVKHRKQHHPRQ). Residues 1-22 (MLIPRKVKHRKQHHPRQRGIAS) are disordered.

Belongs to the universal ribosomal protein uL16 family. As to quaternary structure, part of the 50S ribosomal subunit.

Binds 23S rRNA and is also seen to make contacts with the A and possibly P site tRNAs. The polypeptide is Large ribosomal subunit protein uL16 (Mycobacterium tuberculosis (strain ATCC 25177 / H37Ra)).